Consider the following 562-residue polypeptide: Protein wntless (562 aa).

Residues 1–13 (MSGTILENLSGRK) are Cytoplasmic-facing. The chain crosses the membrane as a helical span at residues 14-34 (LSILVASLLLCQVFCFLLGGL). The Lumenal segment spans residues 35 to 239 (YAPLPAGHVT…AIHQNGGFTQ (205 aa)). N-linked (GlcNAc...) asparagine glycosylation occurs at asparagine 58. Residues 240-260 (IWLMLKTVLFPFVVGIMIWFW) traverse the membrane as a helical segment. Over 261–270 (RRVHLLQRSP) the chain is Cytoplasmic. Residues 271-291 (ALLEYMLIYLGGALTFLNLPL) form a helical membrane-spanning segment. Residues 292 to 311 (EYLSLVVEMPYMLLLSDIRQ) lie on the Lumenal side of the membrane. The chain crosses the membrane as a helical span at residues 312 to 332 (GIFYAMLLSFWLVFAGEHMLI). At 333–344 (QDAPNKSTIRSR) the chain is on the cytoplasmic side. Residues 345–365 (YWKHLSAVVVGCISLFVFDIC) form a helical membrane-spanning segment. Residues 366–390 (ERGVQLRNPFYSIWTTPLGAKVAMT) lie on the Lumenal side of the membrane. The helical transmembrane segment at 391 to 411 (FIILAGVSAAIYFLFLCYMIW) threads the bilayer. Topologically, residues 412-441 (KVFRNIGDKRTSLPSMSQARRLHYEGLIYR) are cytoplasmic. A helical membrane pass occupies residues 442–462 (FKFLMLATLLCAALTVAGFIM). At 463 to 482 (GQMAEGQWQWNDNVEIQLTS) the chain is on the lumenal side. The helical transmembrane segment at 483–503 (AFLTGVYGMWNIYIFALLILY) threads the bilayer. Over 504–562 (APSHKQWPTMHHSDETTQSNENIVASAASEEIEFSHLPSDSNPSEISSLTSFTRKVAFD) the chain is Cytoplasmic. Positions 539 to 562 (HLPSDSNPSEISSLTSFTRKVAFD) are disordered. Over residues 541-556 (PSDSNPSEISSLTSFT) the composition is skewed to polar residues.

The protein belongs to the wntless family. As to quaternary structure, interacts with wg; in the Golgi. Interacts with Vps35, a component of the retromer complex; wls stability is regulated by Vps35.

It localises to the presynaptic cell membrane. It is found in the postsynaptic cell membrane. Its subcellular location is the cell membrane. The protein localises to the endoplasmic reticulum membrane. The protein resides in the endosome membrane. It localises to the golgi apparatus membrane. A segment polarity gene required for wingless (wg)-dependent patterning processes, acting in both wg-sending cells and wg-target cells. In non-neuronal cells wls directs wg secretion. The wls traffic loop encompasses the Golgi, the cell surface, an endocytic compartment and a retrograde route leading back to the Golgi, and involves clathrin-mediated endocytosis and the retromer complex (a conserved protein complex consisting of Vps35 and Vps26). In neuronal cells (the larval motorneuron NMJ), the wg signal moves across the synapse via the release of wls-containing exosome-like vesicles. Postsynaptic wls is required for the trafficking of fz2 through the fz2-interacting protein Grip. The sequence is that of Protein wntless from Drosophila ananassae (Fruit fly).